Reading from the N-terminus, the 295-residue chain is Light-independent protochlorophyllide reductase iron-sulfur ATP-binding protein (295 aa).

Residues 39–44 (GIGKST) and Lys68 each bind ATP. Ser43 is a Mg(2+) binding site. [4Fe-4S] cluster-binding residues include Cys124 and Cys158. ATP-binding positions include 209-210 (NR) and 233-235 (PDL).

Belongs to the NifH/BchL/ChlL family. As to quaternary structure, homodimer. Protochlorophyllide reductase is composed of three subunits; BchL, BchN and BchB. It depends on [4Fe-4S] cluster as a cofactor.

It catalyses the reaction chlorophyllide a + oxidized 2[4Fe-4S]-[ferredoxin] + 2 ADP + 2 phosphate = protochlorophyllide a + reduced 2[4Fe-4S]-[ferredoxin] + 2 ATP + 2 H2O. The protein operates within porphyrin-containing compound metabolism; bacteriochlorophyll biosynthesis (light-independent). In terms of biological role, component of the dark-operative protochlorophyllide reductase (DPOR) that uses Mg-ATP and reduced ferredoxin to reduce ring D of protochlorophyllide (Pchlide) to form chlorophyllide a (Chlide). This reaction is light-independent. The L component serves as a unique electron donor to the NB-component of the complex, and binds Mg-ATP. The polypeptide is Light-independent protochlorophyllide reductase iron-sulfur ATP-binding protein (Rhodospirillum rubrum (strain ATCC 11170 / ATH 1.1.1 / DSM 467 / LMG 4362 / NCIMB 8255 / S1)).